A 320-amino-acid polypeptide reads, in one-letter code: MSDMIQRAAEVPFELGGQRLDQIAAQLFPEHSRSRLAGWIKDGRLTVDGAVLRPRDIVHSGAQLVLEAEQEAQGEWLAQDIELEIVYEDEHILVIDKPAGLVVHPAAGHQDGTLLNALLYHVPDIANVPRAGIVHRLDKDTTGLMVVAKTLEAHTKLVAQLQARSVSRIYEAIVIGVITSGGTIDAPIGRHGVQRQKMAVVDAGKVAVSHYRVLERFRAHTHTRVKLETGRTHQIRVHMSHIGYPLVGDPVYGGRFRIPPVASQTLVQTLREFPRQALHARFLELDHPATGVRMKWESPLPEDFLWLLSLLRQDREAFVG.

The region spanning 18 to 90 is the S4 RNA-binding domain; the sequence is QRLDQIAAQL…IELEIVYEDE (73 aa). Asp-138 is an active-site residue.

This sequence belongs to the pseudouridine synthase RluA family.

It localises to the cytoplasm. The enzyme catalyses uridine(1911/1915/1917) in 23S rRNA = pseudouridine(1911/1915/1917) in 23S rRNA. Its function is as follows. Responsible for synthesis of pseudouridine from uracil at positions 1911, 1915 and 1917 in 23S ribosomal RNA. This chain is Ribosomal large subunit pseudouridine synthase D (rluD), found in Pseudomonas aeruginosa (strain ATCC 15692 / DSM 22644 / CIP 104116 / JCM 14847 / LMG 12228 / 1C / PRS 101 / PAO1).